The following is a 188-amino-acid chain: Large ribosomal subunit protein bL35m (188 aa).

This sequence belongs to the bacterial ribosomal protein bL35 family.

The protein resides in the mitochondrion. The sequence is that of Large ribosomal subunit protein bL35m (MRPL35) from Bos taurus (Bovine).